The chain runs to 633 residues: Threonine--tRNA ligase (633 aa).

The 61-residue stretch at 1–61 (MINITLPDGS…DHDASLRIIT (61 aa)) folds into the TGS domain. The interval 243-534 (DHRRIGKQQD…LIEHHAGQFP (292 aa)) is catalytic. 3 residues coordinate Zn(2+): Cys-334, His-385, and His-511.

This sequence belongs to the class-II aminoacyl-tRNA synthetase family. In terms of assembly, homodimer. Zn(2+) serves as cofactor.

Its subcellular location is the cytoplasm. The enzyme catalyses tRNA(Thr) + L-threonine + ATP = L-threonyl-tRNA(Thr) + AMP + diphosphate + H(+). In terms of biological role, catalyzes the attachment of threonine to tRNA(Thr) in a two-step reaction: L-threonine is first activated by ATP to form Thr-AMP and then transferred to the acceptor end of tRNA(Thr). Also edits incorrectly charged L-seryl-tRNA(Thr). This Stenotrophomonas maltophilia (strain R551-3) protein is Threonine--tRNA ligase.